The chain runs to 616 residues: Heme A synthase-mitochondrial ferredoxin fusion protein (616 aa).

The transit peptide at Met-1–Asn-45 directs the protein to the mitochondrion. Positions Asn-45–His-465 are heme a synthase cox15-like. Over Glu-46 to Lys-97 the chain is Mitochondrial matrix. Residues Val-98–Ile-118 traverse the membrane as a helical segment. The Mitochondrial intermembrane portion of the chain corresponds to Thr-119–Arg-182. Residue His-181 coordinates heme o. Residues Val-183–Lys-203 traverse the membrane as a helical segment. Over Arg-204 to Arg-212 the chain is Mitochondrial matrix. Residues Leu-213 to Ser-233 traverse the membrane as a helical segment. Topologically, residues Gly-234 to Ala-254 are mitochondrial intermembrane. Residues Thr-255–Leu-275 traverse the membrane as a helical segment. His-256 contacts heme o. The Mitochondrial matrix segment spans residues Gln-276–Ser-311. A helical membrane pass occupies residues Phe-312–Gly-332. The Mitochondrial intermembrane segment spans residues Met-333–Gln-380. Residues Leu-381–Ser-401 form a helical membrane-spanning segment. His-383 provides a ligand contact to heme b. The Mitochondrial matrix portion of the chain corresponds to Arg-402 to Asn-417. The helical transmembrane segment at Val-418–Val-438 threads the bilayer. A topological domain (mitochondrial intermembrane) is located at residue Pro-439. A helical membrane pass occupies residues Val-440 to Leu-460. Heme b is bound at residue His-446. The Mitochondrial matrix portion of the chain corresponds to Ala-461–Ala-616. Residues Phe-502 to Thr-606 form the 2Fe-2S ferredoxin-type domain. The segment at Gly-516–Ala-616 is mitochondrial ferredoxin yah1-like. [2Fe-2S] cluster-binding residues include Cys-541, Cys-547, Cys-550, and Cys-587.

It in the N-terminal section; belongs to the COX15/CtaA family. Type 2 subfamily. This sequence in the C-terminal section; belongs to the adrenodoxin/putidaredoxin family. Homodimer. Heme b serves as cofactor. Requires [2Fe-2S] cluster as cofactor. In terms of processing, the etp1 preprotein is cleaved into 2 chains after imort into mitochondria. The N-terminal chain containing a heme A synthase cox15-like domain etp1(cd) is a subunit of the membrane-embedded cytochrome c oxidase complex and functions in the respiratory chain. The C-terminal chain containing a ferredoxin yah1-like domain etp1(fd) is released and serves in the matrix as electron transfer protein.

It localises to the mitochondrion inner membrane. The protein resides in the mitochondrion matrix. The enzyme catalyses Fe(II)-heme o + 2 A + H2O = Fe(II)-heme a + 2 AH2. It functions in the pathway porphyrin-containing compound metabolism; heme A biosynthesis; heme A from heme O: step 1/1. In terms of biological role, catalyzes the second reaction in the biosynthesis of heme A, a prosthetic group of mitochondrial cytochrome c oxidase (CcO). Heme A is synthesized from heme B by two sequential enzymatic reactions catalyzed by heme O synthase (HOS) and heme A synthase (HAS). HAS catalyzes the conversion of heme O to heme A by two successive hydroxylations of the methyl group at C8, in a reaction that involves matrix ferredoxin and ferredoxin reductase. The first hydroxylation forms heme I, the second hydroxylation results in an unstable dihydroxymethyl group, which spontaneously dehydrates, resulting in the formyl group of heme A. Functionally, iron-sulfur protein that transfers electrons in a wide variety of metabolic reactions. Involved in heme A biosynthesis and in iron-sulfur cluster assembly. Transfers electrons from adrenodoxin reductase arh1 to heme A synthase etp1(cd), a heme protein that catalyzes the conversion of heme O to heme A. Required for the de novo synthesis of Fe-S clusters on iron sulfur cluster assembly protein isu1. Interact in its reduced state with isu1 to productively deliver electrons for Fe-S cluster synthesis. Essential for coenzyme Q biosynthesis. May transfer the electrons required for the hydroxylation reaction performed by coq6. This chain is Heme A synthase-mitochondrial ferredoxin fusion protein, found in Schizosaccharomyces pombe (strain 972 / ATCC 24843) (Fission yeast).